The sequence spans 691 residues: Elongation factor G (691 aa).

Residues 8–282 (ERVRNIGIAA…AVVDYLPAPI (275 aa)) enclose the tr-type G domain. GTP is bound by residues 17–24 (AHIDAGKT), 81–85 (DTPGH), and 135–138 (NKMD).

Belongs to the TRAFAC class translation factor GTPase superfamily. Classic translation factor GTPase family. EF-G/EF-2 subfamily.

The protein localises to the cytoplasm. Functionally, catalyzes the GTP-dependent ribosomal translocation step during translation elongation. During this step, the ribosome changes from the pre-translocational (PRE) to the post-translocational (POST) state as the newly formed A-site-bound peptidyl-tRNA and P-site-bound deacylated tRNA move to the P and E sites, respectively. Catalyzes the coordinated movement of the two tRNA molecules, the mRNA and conformational changes in the ribosome. In Synechococcus sp. (strain CC9902), this protein is Elongation factor G.